A 312-amino-acid polypeptide reads, in one-letter code: Deoxycytidylate deaminase (312 aa).

Residues 162–291 (SWDSYFMKLA…RMDEESFKVL (130 aa)) enclose the CMP/dCMP-type deaminase domain. Histidine 233 serves as a coordination point for Zn(2+). Glutamate 235 serves as the catalytic Proton donor. Cysteine 260 and cysteine 263 together coordinate Zn(2+).

Belongs to the cytidine and deoxycytidylate deaminase family. Zn(2+) serves as cofactor.

The enzyme catalyses dCMP + H2O + H(+) = dUMP + NH4(+). With respect to regulation, allosteric enzyme whose activity is greatly influenced by the end products of its metabolic pathway, dCTP and dTTP. In terms of biological role, catalyzes the hydrolytic deamination of dCMP to yield dUMP, the nucleotide substrate for thymidylate synthetase. The chain is Deoxycytidylate deaminase from Saccharomyces cerevisiae (strain ATCC 204508 / S288c) (Baker's yeast).